The chain runs to 158 residues: 2-C-methyl-D-erythritol 2,4-cyclodiphosphate synthase (158 aa).

A divalent metal cation-binding residues include Asp9 and His11. Residues 9–11 (DVH) and 35–36 (HS) each bind 4-CDP-2-C-methyl-D-erythritol 2-phosphate. His43 provides a ligand contact to a divalent metal cation. 4-CDP-2-C-methyl-D-erythritol 2-phosphate is bound by residues 57–59 (DIG), 62–66 (FPDTD), 101–107 (AQKPKMA), 133–136 (TTTE), Phe140, and Arg143.

The protein belongs to the IspF family. In terms of assembly, homotrimer. It depends on a divalent metal cation as a cofactor.

The catalysed reaction is 4-CDP-2-C-methyl-D-erythritol 2-phosphate = 2-C-methyl-D-erythritol 2,4-cyclic diphosphate + CMP. It participates in isoprenoid biosynthesis; isopentenyl diphosphate biosynthesis via DXP pathway; isopentenyl diphosphate from 1-deoxy-D-xylulose 5-phosphate: step 4/6. Functionally, involved in the biosynthesis of isopentenyl diphosphate (IPP) and dimethylallyl diphosphate (DMAPP), two major building blocks of isoprenoid compounds. Catalyzes the conversion of 4-diphosphocytidyl-2-C-methyl-D-erythritol 2-phosphate (CDP-ME2P) to 2-C-methyl-D-erythritol 2,4-cyclodiphosphate (ME-CPP) with a corresponding release of cytidine 5-monophosphate (CMP). The sequence is that of 2-C-methyl-D-erythritol 2,4-cyclodiphosphate synthase from Bacillus cereus (strain ATCC 10987 / NRS 248).